The following is a 301-amino-acid chain: Mitochondrial carnitine/acylcarnitine carrier protein (301 aa).

Position 2 is an N-acetylalanine (A2). Residues 2 to 12 lie on the Cytoplasmic side of the membrane; that stretch reads ADQPKPISPLK. 3 Solcar repeats span residues 8–99, 108–196, and 207–293; these read ISPL…GKKL, LSYP…LKNI, and LSAP…AMKF. A helical membrane pass occupies residues 13–31; that stretch reads NLLAGGFGGVCLVFVGHPL. The Mitochondrial matrix segment spans residues 32–73; sequence DTVKVRLQTQPPSLPGQPPMYSGTFDCFRKTLFREGITGLYR. Residues 74–93 traverse the membrane as a helical segment; it reads GMAAPIIGVTPMFAVCFFGF. Residues 94-112 lie on the Cytoplasmic side of the membrane; that stretch reads GLGKKLQQKHPEDVLSYPQ. A helical membrane pass occupies residues 113–131; it reads LFAAGMLSGVFTTGIMTPG. The Mitochondrial matrix portion of the chain corresponds to 132–170; that stretch reads ERIKCLLQIQASSGESKYTGTLDCAKKLYQEFGIRGIYK. 2 positions are modified to N6-acetyllysine: K148 and K157. K170 carries the post-translational modification N6-acetyllysine; alternate. The residue at position 170 (K170) is an N6-succinyllysine; alternate. Residues 171–190 form a helical membrane-spanning segment; it reads GTVLTLMRDVPASGMYFMTY. Residues 191–211 are Cytoplasmic-facing; that stretch reads EWLKNIFTPEGKRVSELSAPR. The chain crosses the membrane as a helical span at residues 212–230; that stretch reads ILVAGGIAGIFNWAVAIPP. Topologically, residues 231–267 are mitochondrial matrix; sequence DVLKSRFQTAPPGKYPNGFRDVLRELIRDEGVTSLYK. A helical transmembrane segment spans residues 268 to 287; it reads GFNAVMIRAFPANAACFLGF. At 288–301 the chain is on the cytoplasmic side; that stretch reads EVAMKFLNWATPNL.

The protein belongs to the mitochondrial carrier (TC 2.A.29) family.

It localises to the mitochondrion inner membrane. The enzyme catalyses O-acetyl-(R)-carnitine(in) + (R)-carnitine(out) = O-acetyl-(R)-carnitine(out) + (R)-carnitine(in). The catalysed reaction is an O-acyl-(R)-carnitine(in) + (R)-carnitine(out) = an O-acyl-(R)-carnitine(out) + (R)-carnitine(in). It catalyses the reaction O-propanoyl-(R)-carnitine(in) + (R)-carnitine(out) = O-propanoyl-(R)-carnitine(out) + (R)-carnitine(in). It carries out the reaction O-hexadecanoyl-(R)-carnitine(in) + (R)-carnitine(out) = O-hexadecanoyl-(R)-carnitine(out) + (R)-carnitine(in). The enzyme catalyses O-octanoyl-(R)-carnitine(in) + (R)-carnitine(out) = O-octanoyl-(R)-carnitine(out) + (R)-carnitine(in). The catalysed reaction is (R)-carnitine(in) = (R)-carnitine(out). In terms of biological role, mediates the electroneutral exchange of acylcarnitines (O-acyl-(R)-carnitine or L-acylcarnitine) of different acyl chain lengths (ranging from O-acetyl-(R)-carnitine to long-chain O-acyl-(R)-carnitines) with free carnitine ((R)-carnitine or L-carnitine) across the mitochondrial inner membrane, via a ping-pong mechanism. Key player in the mitochondrial oxidation pathway, it translocates the fatty acids in the form of acylcarnitines into the mitochondrial matrix, where the carnitine palmitoyltransferase 2 (CPT-2) activates them to undergo fatty acid beta-oxidation. Catalyzes the unidirectional transport (uniport) of carnitine at lower rates than the antiport (exchange). This is Mitochondrial carnitine/acylcarnitine carrier protein from Homo sapiens (Human).